The sequence spans 325 residues: Lipoyl synthase (325 aa).

The segment at 1–33 is disordered; it reads MATVIDTLKARGSEDRAARHPEKQNRPDTPVLR. Residues 8–33 show a composition bias toward basic and acidic residues; sequence LKARGSEDRAARHPEKQNRPDTPVLR. The [4Fe-4S] cluster site is built by Cys64, Cys69, Cys75, Cys90, Cys94, Cys97, and Ser303. In terms of domain architecture, Radical SAM core spans 76–292; that stretch reads WSQKHATMMI…EAIARAKGFL (217 aa).

The protein belongs to the radical SAM superfamily. Lipoyl synthase family. Requires [4Fe-4S] cluster as cofactor.

It is found in the cytoplasm. The catalysed reaction is [[Fe-S] cluster scaffold protein carrying a second [4Fe-4S](2+) cluster] + N(6)-octanoyl-L-lysyl-[protein] + 2 oxidized [2Fe-2S]-[ferredoxin] + 2 S-adenosyl-L-methionine + 4 H(+) = [[Fe-S] cluster scaffold protein] + N(6)-[(R)-dihydrolipoyl]-L-lysyl-[protein] + 4 Fe(3+) + 2 hydrogen sulfide + 2 5'-deoxyadenosine + 2 L-methionine + 2 reduced [2Fe-2S]-[ferredoxin]. It functions in the pathway protein modification; protein lipoylation via endogenous pathway; protein N(6)-(lipoyl)lysine from octanoyl-[acyl-carrier-protein]: step 2/2. Its function is as follows. Catalyzes the radical-mediated insertion of two sulfur atoms into the C-6 and C-8 positions of the octanoyl moiety bound to the lipoyl domains of lipoate-dependent enzymes, thereby converting the octanoylated domains into lipoylated derivatives. The polypeptide is Lipoyl synthase (Caulobacter vibrioides (strain ATCC 19089 / CIP 103742 / CB 15) (Caulobacter crescentus)).